A 167-amino-acid chain; its full sequence is Probable phospholipid hydroperoxide glutathione peroxidase (167 aa).

C41 is a catalytic residue.

It belongs to the glutathione peroxidase family.

It localises to the cytoplasm. The enzyme catalyses a hydroperoxy polyunsaturated fatty acid + 2 glutathione = a hydroxy polyunsaturated fatty acid + glutathione disulfide + H2O. In terms of biological role, protects cells and enzymes from oxidative damage, by catalyzing the reduction of hydrogen peroxide, lipid peroxides and organic hydroperoxide, by glutathione. The chain is Probable phospholipid hydroperoxide glutathione peroxidase (CSA) from Citrus sinensis (Sweet orange).